The following is a 230-amino-acid chain: MIYFTMFLLGGILGIALWFYLSGFITRLQQNIYAIYVELFPQNRSPFQPHFASIQQKKCGHILRYFFSIGVGFIFLQIAFKDSIFTVWIGLTLIILWTISYLDWHYQLISTTPCLWLLTLGLFGADNNFSLLTLSESIKSAASFFIVFYVIYWLAKFYYGKEAFGRGDYWLAMALGSFIHLETLPHFLLLASVLGICFSLIHRKKKEFLPFAPFMNLSAVIIYFVKYYGY.

7 helical membrane passes run 1–21, 60–80, 84–104, 114–134, 140–160, 181–201, and 208–228; these read MIYF…WFYL, GHIL…QIAF, IFTV…YLDW, CLWL…LLTL, SAAS…FYYG, LETL…FSLI, and FLPF…VKYY.

The protein belongs to the peptidase A24 family.

Its subcellular location is the cell inner membrane. It catalyses the reaction Typically cleaves a -Gly-|-Phe- bond to release an N-terminal, basic peptide of 5-8 residues from type IV prepilin, and then N-methylates the new N-terminal amino group, the methyl donor being S-adenosyl-L-methionine.. Functionally, plays a role in type II pseudopili formation by proteolytically removing the leader sequence from substrate proteins and subsequently monomethylating the alpha-amino group of the newly exposed N-terminal phenylalanine. Substrates include proteins required for biogenesis of the type II general secretory apparatus. The sequence is that of Prepilin leader peptidase/N-methyltransferase (hofD) from Haemophilus influenzae (strain ATCC 51907 / DSM 11121 / KW20 / Rd).